We begin with the raw amino-acid sequence, 188 residues long: MPHSSPGAPLDPVAFIHSQIRTVPDWPQPGVQFRDITTLLQSPKALRILVDLFVERYVDAKLDYVAGLDARGFIIAPIVAYELSVGFVPIRKVGKLPYKTRSESYDLEYGSATVEIHEDACRPGDRVIIMDDLIATGGTMMAGRNLLQRLGAVVVEGAAIIDLPDLGGSTLLRNAGLPVYTVTEFAGH.

Belongs to the purine/pyrimidine phosphoribosyltransferase family. In terms of assembly, homodimer.

It localises to the cytoplasm. It catalyses the reaction AMP + diphosphate = 5-phospho-alpha-D-ribose 1-diphosphate + adenine. Its pathway is purine metabolism; AMP biosynthesis via salvage pathway; AMP from adenine: step 1/1. Catalyzes a salvage reaction resulting in the formation of AMP, that is energically less costly than de novo synthesis. The polypeptide is Adenine phosphoribosyltransferase (Burkholderia ambifaria (strain MC40-6)).